The following is a 141-amino-acid chain: Large ribosomal subunit protein uL11 (141 aa).

The protein belongs to the universal ribosomal protein uL11 family. Part of the ribosomal stalk of the 50S ribosomal subunit. Interacts with L10 and the large rRNA to form the base of the stalk. L10 forms an elongated spine to which L12 dimers bind in a sequential fashion forming a multimeric L10(L12)X complex. One or more lysine residues are methylated.

Forms part of the ribosomal stalk which helps the ribosome interact with GTP-bound translation factors. The polypeptide is Large ribosomal subunit protein uL11 (Roseobacter denitrificans (strain ATCC 33942 / OCh 114) (Erythrobacter sp. (strain OCh 114))).